Reading from the N-terminus, the 197-residue chain is Nucleoid occlusion factor SlmA (197 aa).

The 61-residue stretch at 7 to 67 (INRREHILQC…GLIEFIEDAI (61 aa)) folds into the HTH tetR-type domain. A DNA-binding region (H-T-H motif) is located at residues 30 to 49 (TTAKLAAEVGVSEAALYRHF).

This sequence belongs to the nucleoid occlusion factor SlmA family. In terms of assembly, homodimer. Interacts with FtsZ.

The protein resides in the cytoplasm. The protein localises to the nucleoid. Its function is as follows. Required for nucleoid occlusion (NO) phenomenon, which prevents Z-ring formation and cell division over the nucleoid. Acts as a DNA-associated cell division inhibitor that binds simultaneously chromosomal DNA and FtsZ, and disrupts the assembly of FtsZ polymers. SlmA-DNA-binding sequences (SBS) are dispersed on non-Ter regions of the chromosome, preventing FtsZ polymerization at these regions. This is Nucleoid occlusion factor SlmA from Shewanella denitrificans (strain OS217 / ATCC BAA-1090 / DSM 15013).